The primary structure comprises 409 residues: Isovaleryl-CoA dehydrogenase, mitochondrial (409 aa).

The N-terminal 22 residues, 1-22, are a transit peptide targeting the mitochondrion; sequence MQRFFSARSILGYAVKTRRRSF. FAD-binding positions include 151 to 160 and 184 to 186; these read LAMSEPNAGS and WCT. Ser160 serves as a coordination point for substrate. Substrate is bound by residues 206–207, Tyr261, and 268–271; these read SK and DLER. Glu270 serves as the catalytic Proton acceptor. FAD-binding positions include Arg296, Gln307, and 364-368; that span reads QCLGG. 391 to 392 provides a ligand contact to substrate; the sequence is AG. 393–395 contacts FAD; that stretch reads TSE.

Belongs to the acyl-CoA dehydrogenase family. Homodimer. FAD is required as a cofactor. In terms of tissue distribution, expressed in leaves, stems and flowers. Not detected in roots.

It is found in the mitochondrion. The catalysed reaction is 3-methylbutanoyl-CoA + oxidized [electron-transfer flavoprotein] + H(+) = 3-methylbut-2-enoyl-CoA + reduced [electron-transfer flavoprotein]. It participates in amino-acid degradation; L-leucine degradation; (S)-3-hydroxy-3-methylglutaryl-CoA from 3-isovaleryl-CoA: step 1/3. Its function is as follows. Involved in degradation of the branched-chain amino acids, phytol and lysine for the supply of carbon and electrons to the ETF/ETFQO complex during dark-induced sugar starvation. The chain is Isovaleryl-CoA dehydrogenase, mitochondrial (IVD) from Arabidopsis thaliana (Mouse-ear cress).